Reading from the N-terminus, the 397-residue chain is Riboflavin biosynthesis protein RibBA (397 aa).

The tract at residues 1–199 (MFHRIEEALE…IEDLIAYRRH (199 aa)) is DHBP synthase. Residues 26–27 (RE), Asp-31, 138–142 (RAGHT), and Glu-162 contribute to the D-ribulose 5-phosphate site. Glu-27 lines the Mg(2+) pocket. Residue His-141 coordinates Mg(2+). Positions 200-397 (HETLVTREVE…VNKLGHLLNL (198 aa)) are GTP cyclohydrolase II. 250–254 (RVHSE) serves as a coordination point for GTP. Cys-255, Cys-266, and Cys-268 together coordinate Zn(2+). GTP-binding positions include Gln-271, 293 to 295 (EGR), and Thr-315. The active-site Proton acceptor; for GTP cyclohydrolase activity is Asp-327. The Nucleophile; for GTP cyclohydrolase activity role is filled by Arg-329. Residues Thr-350 and Lys-355 each coordinate GTP.

This sequence in the N-terminal section; belongs to the DHBP synthase family. In the C-terminal section; belongs to the GTP cyclohydrolase II family. Mg(2+) is required as a cofactor. Mn(2+) serves as cofactor. Requires Zn(2+) as cofactor.

The enzyme catalyses D-ribulose 5-phosphate = (2S)-2-hydroxy-3-oxobutyl phosphate + formate + H(+). It catalyses the reaction GTP + 4 H2O = 2,5-diamino-6-hydroxy-4-(5-phosphoribosylamino)-pyrimidine + formate + 2 phosphate + 3 H(+). It participates in cofactor biosynthesis; riboflavin biosynthesis; 2-hydroxy-3-oxobutyl phosphate from D-ribulose 5-phosphate: step 1/1. The protein operates within cofactor biosynthesis; riboflavin biosynthesis; 5-amino-6-(D-ribitylamino)uracil from GTP: step 1/4. In terms of biological role, catalyzes the conversion of D-ribulose 5-phosphate to formate and 3,4-dihydroxy-2-butanone 4-phosphate. Catalyzes the conversion of GTP to 2,5-diamino-6-ribosylamino-4(3H)-pyrimidinone 5'-phosphate (DARP), formate and pyrophosphate. This is Riboflavin biosynthesis protein RibBA from Bacillus cereus (strain B4264).